Reading from the N-terminus, the 166-residue chain is Ribosome maturation factor RimM (166 aa).

The PRC barrel domain occupies 94-165 (EGEYYLGKLI…TIELKVLDLL (72 aa)).

This sequence belongs to the RimM family. In terms of assembly, binds ribosomal protein uS19.

It is found in the cytoplasm. An accessory protein needed during the final step in the assembly of 30S ribosomal subunit, possibly for assembly of the head region. Essential for efficient processing of 16S rRNA. May be needed both before and after RbfA during the maturation of 16S rRNA. It has affinity for free ribosomal 30S subunits but not for 70S ribosomes. This is Ribosome maturation factor RimM from Borrelia garinii subsp. bavariensis (strain ATCC BAA-2496 / DSM 23469 / PBi) (Borreliella bavariensis).